Here is a 304-residue protein sequence, read N- to C-terminus: Elongation factor Ts (304 aa).

An involved in Mg(2+) ion dislocation from EF-Tu region spans residues 79–82; it reads TDFV.

It belongs to the EF-Ts family.

It is found in the cytoplasm. Its function is as follows. Associates with the EF-Tu.GDP complex and induces the exchange of GDP to GTP. It remains bound to the aminoacyl-tRNA.EF-Tu.GTP complex up to the GTP hydrolysis stage on the ribosome. The polypeptide is Elongation factor Ts (Polaromonas sp. (strain JS666 / ATCC BAA-500)).